A 230-amino-acid chain; its full sequence is U2 small nuclear ribonucleoprotein A' (230 aa).

3 LRR repeats span residues 19-40, 41-62, and 65-86; these read KDRE…PFFP, RLRM…LANS, and GLTT…DPLR. Residues 99 to 137 enclose the LRRCT domain; that stretch reads NPVTRKEYYRLWIIWRIPSVRFLDYQKVKDAERAKAAEL. A disordered region spans residues 211–230; sequence GRIPGGALDGAGNDGDQMQL. Residues 213 to 223 are compositionally biased toward gly residues; that stretch reads IPGGALDGAGN.

The protein belongs to the U2 small nuclear ribonucleoprotein A family. Associated with the spliceosome.

The protein resides in the nucleus. Its function is as follows. Involved in pre-mRNA splicing. The polypeptide is U2 small nuclear ribonucleoprotein A' (lea1) (Emericella nidulans (strain FGSC A4 / ATCC 38163 / CBS 112.46 / NRRL 194 / M139) (Aspergillus nidulans)).